Reading from the N-terminus, the 432-residue chain is Enolase (432 aa).

Position 167 (glutamine 167) interacts with (2R)-2-phosphoglycerate. Glutamate 209 (proton donor) is an active-site residue. 3 residues coordinate Mg(2+): aspartate 246, glutamate 290, and aspartate 317. (2R)-2-phosphoglycerate contacts are provided by lysine 342, arginine 371, serine 372, and lysine 393. Lysine 342 serves as the catalytic Proton acceptor.

Belongs to the enolase family. Component of the RNA degradosome, a multiprotein complex involved in RNA processing and mRNA degradation. Requires Mg(2+) as cofactor.

Its subcellular location is the cytoplasm. The protein localises to the secreted. It localises to the cell surface. The enzyme catalyses (2R)-2-phosphoglycerate = phosphoenolpyruvate + H2O. The protein operates within carbohydrate degradation; glycolysis; pyruvate from D-glyceraldehyde 3-phosphate: step 4/5. Catalyzes the reversible conversion of 2-phosphoglycerate (2-PG) into phosphoenolpyruvate (PEP). It is essential for the degradation of carbohydrates via glycolysis. The sequence is that of Enolase from Escherichia coli O139:H28 (strain E24377A / ETEC).